A 269-amino-acid chain; its full sequence is 5'-nucleotidase SurE (269 aa).

D11, D12, S43, and N101 together coordinate a divalent metal cation.

It belongs to the SurE nucleotidase family. A divalent metal cation serves as cofactor.

It localises to the cytoplasm. The catalysed reaction is a ribonucleoside 5'-phosphate + H2O = a ribonucleoside + phosphate. Nucleotidase that shows phosphatase activity on nucleoside 5'-monophosphates. This chain is 5'-nucleotidase SurE, found in Prochlorococcus marinus (strain AS9601).